The following is a 199-amino-acid chain: MEWNYVIPGIPDNLFERDEEIPMTKEEIRALALSKLRIKKGDKVLDIGCGTGSITVEASLLVGNSGRVYGIDKEEKAINLTRRNAEKFGVLNNIVLIKGEAPAILSTINEKFDRIFIGGGSEKIKEIISASWEIINKGGRIVIDAILLETVNNALSAMEKIGFVNLEITEVIIAKGMKTKVGTAMMARNPIFIISGEKP.

S-adenosyl-L-methionine-binding positions include Thr-24, 48-52 (GCGTG), Asp-72, and Ala-101.

It belongs to the methyltransferase superfamily. Archaeal-type CbiT family.

It catalyses the reaction Co-precorrin-6B + S-adenosyl-L-methionine = Co-precorrin-7 + S-adenosyl-L-homocysteine + CO2. It participates in cofactor biosynthesis; adenosylcobalamin biosynthesis; cob(II)yrinate a,c-diamide from sirohydrochlorin (anaerobic route): step 8/10. Catalyzes the methylation of C-15 in cobalt-precorrin-6B followed by the decarboxylation of C-12 to form cobalt-precorrin-7. The protein is Probable cobalt-precorrin-6B C(15)-methyltransferase (decarboxylating) of Saccharolobus solfataricus (strain ATCC 35092 / DSM 1617 / JCM 11322 / P2) (Sulfolobus solfataricus).